The chain runs to 215 residues: LexA repressor (215 aa).

Residues 28 to 48 (RAEIAAELGFSSPNAAEEHLR) constitute a DNA-binding region (H-T-H motif). Residues serine 133 and lysine 170 each act as for autocatalytic cleavage activity in the active site.

It belongs to the peptidase S24 family. As to quaternary structure, homodimer.

It catalyses the reaction Hydrolysis of Ala-|-Gly bond in repressor LexA.. In terms of biological role, represses a number of genes involved in the response to DNA damage (SOS response), including recA and lexA. In the presence of single-stranded DNA, RecA interacts with LexA causing an autocatalytic cleavage which disrupts the DNA-binding part of LexA, leading to derepression of the SOS regulon and eventually DNA repair. The polypeptide is LexA repressor (Burkholderia ambifaria (strain MC40-6)).